The primary structure comprises 365 residues: Cobalt-precorrin-5B C(1)-methyltransferase (365 aa).

Belongs to the CbiD family.

The enzyme catalyses Co-precorrin-5B + S-adenosyl-L-methionine = Co-precorrin-6A + S-adenosyl-L-homocysteine. Its pathway is cofactor biosynthesis; adenosylcobalamin biosynthesis; cob(II)yrinate a,c-diamide from sirohydrochlorin (anaerobic route): step 6/10. Functionally, catalyzes the methylation of C-1 in cobalt-precorrin-5B to form cobalt-precorrin-6A. The polypeptide is Cobalt-precorrin-5B C(1)-methyltransferase (Paraburkholderia phytofirmans (strain DSM 17436 / LMG 22146 / PsJN) (Burkholderia phytofirmans)).